A 341-amino-acid polypeptide reads, in one-letter code: Anthranilate phosphoribosyltransferase (341 aa).

5-phospho-alpha-D-ribose 1-diphosphate is bound by residues G79, 82–83, T87, 89–92, 107–115, and S119; these read GD, NIST, and KHGNRAVSS. G79 serves as a coordination point for anthranilate. Residue S91 participates in Mg(2+) binding. N110 is a binding site for anthranilate. An anthranilate-binding site is contributed by R165. Mg(2+) contacts are provided by D224 and E225.

It belongs to the anthranilate phosphoribosyltransferase family. In terms of assembly, homodimer. Mg(2+) is required as a cofactor.

The catalysed reaction is N-(5-phospho-beta-D-ribosyl)anthranilate + diphosphate = 5-phospho-alpha-D-ribose 1-diphosphate + anthranilate. The protein operates within amino-acid biosynthesis; L-tryptophan biosynthesis; L-tryptophan from chorismate: step 2/5. In terms of biological role, catalyzes the transfer of the phosphoribosyl group of 5-phosphorylribose-1-pyrophosphate (PRPP) to anthranilate to yield N-(5'-phosphoribosyl)-anthranilate (PRA). The polypeptide is Anthranilate phosphoribosyltransferase (Bacillus cereus (strain ZK / E33L)).